Consider the following 762-residue polypeptide: 5-methyltetrahydropteroyltriglutamate--homocysteine methyltransferase (762 aa).

Residues 17–20 (REWK) and Lys111 each bind 5-methyltetrahydropteroyltri-L-glutamate. Residues 435-437 (IGS) and Glu488 contribute to the L-homocysteine site. Residues 435–437 (IGS) and Glu488 contribute to the L-methionine site. Residues 519–520 (RC) and Trp565 contribute to the 5-methyltetrahydropteroyltri-L-glutamate site. Asp603 is an L-homocysteine binding site. Asp603 is a binding site for L-methionine. Glu609 lines the 5-methyltetrahydropteroyltri-L-glutamate pocket. Zn(2+) is bound by residues His645, Cys647, and Glu669. His698 acts as the Proton donor in catalysis. Cys730 is a Zn(2+) binding site.

The protein belongs to the vitamin-B12 independent methionine synthase family. Requires Zn(2+) as cofactor.

The catalysed reaction is 5-methyltetrahydropteroyltri-L-glutamate + L-homocysteine = tetrahydropteroyltri-L-glutamate + L-methionine. Its pathway is amino-acid biosynthesis; L-methionine biosynthesis via de novo pathway; L-methionine from L-homocysteine (MetE route): step 1/1. In terms of biological role, catalyzes the transfer of a methyl group from 5-methyltetrahydrofolate to homocysteine resulting in methionine formation. The sequence is that of 5-methyltetrahydropteroyltriglutamate--homocysteine methyltransferase from Bacillus cereus (strain G9842).